The following is a 208-amino-acid chain: 2-dehydro-3-deoxy-phosphogluconate aldolase (208 aa).

Glu41 functions as the Proton acceptor in the catalytic mechanism. Arg45, Thr68, and Lys128 together coordinate pyruvate. Lys128 acts as the Schiff-base intermediate with substrate in catalysis.

Belongs to the KHG/KDPG aldolase family. As to quaternary structure, homotrimer.

It is found in the cytoplasm. It carries out the reaction 2-dehydro-3-deoxy-6-phospho-D-gluconate = D-glyceraldehyde 3-phosphate + pyruvate. Its pathway is carbohydrate acid metabolism; 2-dehydro-3-deoxy-D-gluconate degradation; D-glyceraldehyde 3-phosphate and pyruvate from 2-dehydro-3-deoxy-D-gluconate: step 2/2. Its function is as follows. Involved in the degradation of glucose via the Entner-Doudoroff pathway. Catalyzes the reversible, stereospecific retro-aldol cleavage of 2-keto-3-deoxy-6-phosphogluconate (KDPG) to pyruvate and D-glyceraldehyde-3-phosphate. The polypeptide is 2-dehydro-3-deoxy-phosphogluconate aldolase (Zymomonas mobilis subsp. mobilis (strain ATCC 31821 / ZM4 / CP4)).